A 472-amino-acid chain; its full sequence is Tubulin gamma chain (472 aa).

142 to 148 (AGGTGSG) contacts GTP.

Belongs to the tubulin family.

The protein resides in the cytoplasm. It localises to the cytoskeleton. The protein localises to the microtubule organizing center. Its function is as follows. Tubulin is the major constituent of microtubules. The gamma chain is found at microtubule organizing centers (MTOC) such as the spindle poles, suggesting that it is involved in the minus-end nucleation of microtubule assembly. The polypeptide is Tubulin gamma chain (TUBG) (Anemia phyllitidis (Fern)).